Here is a 168-residue protein sequence, read N- to C-terminus: Endoribonuclease YbeY (168 aa).

Zn(2+) is bound by residues His132, His136, and His142.

This sequence belongs to the endoribonuclease YbeY family. Zn(2+) serves as cofactor.

Its subcellular location is the cytoplasm. Its function is as follows. Single strand-specific metallo-endoribonuclease involved in late-stage 70S ribosome quality control and in maturation of the 3' terminus of the 16S rRNA. The polypeptide is Endoribonuclease YbeY (Clostridium perfringens (strain ATCC 13124 / DSM 756 / JCM 1290 / NCIMB 6125 / NCTC 8237 / Type A)).